Here is a 55-residue protein sequence, read N- to C-terminus: Large ribosomal subunit protein eL40 (55 aa).

Belongs to the eukaryotic ribosomal protein eL40 family.

The protein is Large ribosomal subunit protein eL40 of Ignicoccus hospitalis (strain KIN4/I / DSM 18386 / JCM 14125).